The following is a 250-amino-acid chain: Accessory gland-specific peptide 26Aa (250 aa).

A signal peptide spans 1 to 18 (MNQILLCSQILLLFFTVA). Residues 79–100 (DYPINNSKSRKNSSTLPSPILT) form a disordered region. The span at 82-95 (INNSKSRKNSSTLP) shows a compositional bias: polar residues. N-linked (GlcNAc...) asparagine glycosylation is found at asparagine 83, asparagine 90, and asparagine 131. 2 disordered regions span residues 172 to 191 (NVQNARKSTKSCKKRPSKDI) and 230 to 250 (NNPATDVPTGKSPSEGNPSTT). Basic residues predominate over residues 178 to 187 (KSTKSCKKRP). The span at 240-250 (KSPSEGNPSTT) shows a compositional bias: polar residues.

In terms of processing, proteolytically cleaved as it is secreted and in the recipient female. In terms of tissue distribution, main cells of the accessory glands of males.

The protein localises to the secreted. Its subcellular location is the extracellular space. Functionally, this protein is transferred from male to female's hemolymph during mating, affecting egglaying and behavior after mating. The chain is Accessory gland-specific peptide 26Aa (Acp26Aa) from Drosophila mauritiana (Fruit fly).